Consider the following 111-residue polypeptide: Resistin-like alpha (111 aa).

An N-terminal signal peptide occupies residues 1 to 23; that stretch reads MKTATCSLLICVFLLQLMVPVNT. 5 disulfide bridges follow: C55/C108, C67/C107, C76/C93, C78/C95, and C82/C97.

Belongs to the resistin/FIZZ family. As to quaternary structure, monomer. Highest levels in adipose tissue.

The protein localises to the secreted. Its function is as follows. Probable hormone. Plays a role in pulmonary vascular remodeling. The chain is Resistin-like alpha (Retnla) from Rattus norvegicus (Rat).